We begin with the raw amino-acid sequence, 410 residues long: Putative transporter AmpG 1 (410 aa).

Helical transmembrane passes span 5–25 (LSII…TGNT), 40–60 (IGLL…APIF), 76–96 (LSWI…LSFL), 98–118 (PFDN…FSSM), 141–161 (GIYI…AIYL), 169–189 (EIYK…IVGV), 217–237 (ILKP…LILY), 265–285 (VGKF…GFIM), 290–310 (ILDS…LFII), 320–340 (LLFI…TAYI), 356–378 (YSFF…GYIV), and 383–402 (WQNF…LVLL).

It belongs to the major facilitator superfamily.

It localises to the cell inner membrane. The polypeptide is Putative transporter AmpG 1 (ampG1) (Rickettsia bellii (strain RML369-C)).